Here is a 399-residue protein sequence, read N- to C-terminus: Protein phosphatase 2C 37 (399 aa).

In terms of domain architecture, PPM-type phosphatase spans 104 to 389; it reads KIGTTSVCGR…DNVSVVVVDL (286 aa). Residues D142 and G143 each contribute to the Mn(2+) site. Zn(2+) is bound by residues C146, H148, C208, and C210. D327, D331, and D380 together coordinate Mn(2+).

The protein belongs to the PP2C family. Interacts with AKT2/AKT3. Interacts with ABA-bounded PYR1, PYL1, PYL2, PYL3, PYL4, PYL9 and PYL12, and with free PYL2, PYL3, PYL4 and PYL13. Binds to and inactivates SLAC1 and SRK2E. The inactivation of SRK2E does not require phosphatase activity. Interacts with CBL1, CBL2, CBL3, CBL5, and CBL7, but not CBL4, CBL6, and CBL9. Interacts with RGLG1 and RGLG5. Interacts with KIN10. Mg(2+) serves as cofactor. Mn(2+) is required as a cofactor. Post-translationally, ubiquitinated by RGLG1 and RGLG5 in response to abscisic acid (ABA). Ubiquitination of PP2CA leads to its degradation by the proteasome. Mostly expressed in seeds and leaves, and, to a lower extent, in roots, stems, and flowers, particularly in siliques. Essentially found in the phloem.

The enzyme catalyses O-phospho-L-seryl-[protein] + H2O = L-seryl-[protein] + phosphate. It catalyses the reaction O-phospho-L-threonyl-[protein] + H2O = L-threonyl-[protein] + phosphate. Its activity is regulated as follows. Repressed by PYR/PYL/RCAR ABA receptors in an ABA-dependent manner. In terms of biological role, major negative regulator of abscisic acid (ABA) responses during seed germination and cold acclimation. Confers insensitivity to ABA. Modulates negatively the AKT2/3 activity, which mediates K(+) transport and membrane polarization during stress situations, probably by dephosphorylation. Prevents stomata closure by inactivating the S-type anion efflux channel SLAC1 and its activator SRK2E. Represses KIN10 activity by the specific dephosphorylation of its T-loop Thr-198, leading to a poststress inactivation of SnRK1 signaling. The sequence is that of Protein phosphatase 2C 37 (PP2CA) from Arabidopsis thaliana (Mouse-ear cress).